A 723-amino-acid polypeptide reads, in one-letter code: ADP-ribosylation factor-binding protein GGA3 (723 aa).

Residues 1 to 313 (MAEAEGESLE…GEVATLTLPD (313 aa)) form a binds to ARF1 (in long isoform) region. The region spanning 16–146 (ATNPSNRQED…MLKRQGIVQS (131 aa)) is the VHS domain. Serine 159 and serine 275 each carry phosphoserine. Residues 171 to 298 (DEEKSKLLAK…VINSYKTIIE (128 aa)) form the GAT domain. Positions 299-593 (GQVINGEVAT…IHVPLESIKP (295 aa)) are unstructured hinge. Residues 339–384 (SSVLAPAPTPPSSGIPILPPPPQASGPPRSRSSSQAEATLGPSSTS) form a disordered region. The segment covering 345–363 (APTPPSSGIPILPPPPQAS) has biased composition (pro residues). The span at 364 to 374 (GPPRSRSSSQA) shows a compositional bias: low complexity. A DXXLL motif is present at residues 391-395 (DEELL). A disordered region spans residues 428–464 (DFFSPRPGTAACGASDAPLLQPSAPSSSSSQAPLPPP). Residues 441–459 (ASDAPLLQPSAPSSSSSQA) are compositionally biased toward low complexity. Residues 594 to 715 (SSALPVTAYD…TEVGEVDQFP (122 aa)) enclose the GAE domain.

This sequence belongs to the GGA protein family. Monomer. Interacts with GGA1 and GGA2. Binds to clathrin and activated ARFs, such as ARF1, ARF5 and ARF6. Binds RABEP1 and RABGEF1. Interacts with the membrane proteins M6PR/CD-MPR and IGF2R/CI-MPR and the accessory proteins SYNRG, EPN4, NECAP1, NECAP2 and AFTPH/aftiphilin. Interacts with TSG101 and UBC. Interacts with ADRA2B. Interacts with NTRK1; the interaction is independent of NTRK1 activation and ubiquitination. Interacts (via VHS domain) with BACE1 (via DXXLL motif). In terms of processing, phosphorylated by CK2 and dephosphorylated by PP2A. Phosphorylation of GGA3 allows the internal DXXLL motif to bind the VHS domain and to inhibit the recognition of cargo signals. Post-translationally, ubiquitinated. Proteolytically cleaved during apoptosis by CASP3. Ubiquitously expressed.

The protein localises to the golgi apparatus. It is found in the trans-Golgi network membrane. The protein resides in the endosome membrane. Its subcellular location is the early endosome membrane. It localises to the recycling endosome membrane. Its function is as follows. Plays a role in protein sorting and trafficking between the trans-Golgi network (TGN) and endosomes. Mediates the ARF-dependent recruitment of clathrin to the TGN and binds ubiquitinated proteins and membrane cargo molecules with a cytosolic acidic cluster-dileucine (DXXLL) motif. Mediates export of the GPCR receptor ADRA2B to the cell surface. nvolved in BACE1 transport and sorting as well as regulation of BACE1 protein levels. Regulates retrograde transport of BACE1 from endosomes to the trans-Golgi network via interaction through the VHS motif and dependent of BACE1 phosphorylation. Modulates BACE1 protein levels independently of the interaction between VHS domain and DXXLL motif through recognition of ubiquitination. Key player in a novel DXXLL-mediated endosomal sorting machinery to the recycling pathway that targets NTRK1 to the plasma membrane. This Homo sapiens (Human) protein is ADP-ribosylation factor-binding protein GGA3.